Reading from the N-terminus, the 407-residue chain is Substance-P receptor (407 aa).

Residues 1 to 31 are Extracellular-facing; the sequence is MDNVLQVDSDLFPNISTNTSEPNQFVQPAWQ. N14 and N18 each carry an N-linked (GlcNAc...) asparagine glycan. A helical transmembrane segment spans residues 32-54; the sequence is IVLWAAAYTVIVVTSVVGNVVVM. Residues 55 to 64 are Cytoplasmic-facing; sequence WIILAHKRMR. Residues 65-86 traverse the membrane as a helical segment; sequence TVTNYFLVNLAFAEASMAAFNT. Residues 87–106 lie on the Extracellular side of the membrane; it reads VVNFTYAVHNEWYYGLFYCK. A disulfide bridge connects residues C105 and C180. A helical membrane pass occupies residues 107-128; that stretch reads FHNFFPIAAVFASIYSMTAVAF. Over 129–148 the chain is Cytoplasmic; sequence DRYMAIIHPLQPRLSATATK. Residues 149–169 form a helical membrane-spanning segment; sequence VVICVIWVLALLLAFPQGYYS. At 170-194 the chain is on the extracellular side; it reads TTETMPNRVVCMIEWPEHPNKIYEK. A helical transmembrane segment spans residues 195-219; the sequence is VYHICVTVLIYFLPLLVIGYAYTVV. Residues 220 to 248 are Cytoplasmic-facing; the sequence is GITLWASEIPGDSSDRYHEQVSAKRKVVK. Residues 249 to 270 form a helical membrane-spanning segment; sequence MMIVVVCTFAICWLPFHIFFLL. Residues 271-283 lie on the Extracellular side of the membrane; sequence PYINPDLYLEKFI. Residues 284–308 form a helical membrane-spanning segment; it reads QQVYLAIMWLAMSSTMYNPIIYCCL. The Cytoplasmic portion of the chain corresponds to 309–407; that stretch reads NDRFRLGFKH…SFSFYSNMLS (99 aa). C322 carries S-palmitoyl cysteine lipidation. Residues 365-394 are disordered; sequence HEEELEDGPKTTPSSLDLTSNGSSRSDSKT. Over residues 375–394 the composition is skewed to polar residues; it reads TTPSSLDLTSNGSSRSDSKT.

This sequence belongs to the G-protein coupled receptor 1 family. As to quaternary structure, interacts with ARRB1.

It localises to the cell membrane. In terms of biological role, this is a receptor for the tachykinin neuropeptide substance P. It is probably associated with G proteins that activate a phosphatidylinositol-calcium second messenger system. The chain is Substance-P receptor (TACR1) from Canis lupus familiaris (Dog).